A 198-amino-acid chain; its full sequence is Recombination protein RecR (198 aa).

The segment at 57–72 adopts a C4-type zinc-finger fold; sequence CSVCGHITENDPCYIC. In terms of domain architecture, Toprim spans 80–175; the sequence is SVICVVEDDK…KVTRLAQGLS (96 aa).

Belongs to the RecR family.

Its function is as follows. May play a role in DNA repair. It seems to be involved in an RecBC-independent recombinational process of DNA repair. It may act with RecF and RecO. This chain is Recombination protein RecR, found in Staphylococcus aureus (strain MSSA476).